We begin with the raw amino-acid sequence, 633 residues long: MSGGSRIQLLSPRLTNQIAAGEVVERPASVAKELLENSLDSGARRIDVEVEQGGVKLLRVRDDGSGISADDLPLALARHATSKIRELEDLEGVLSLGFRGEALASISSVARLTLTSRTASASEAWQVETEGRDMTPRVQPAAHPVGTSVEVRDLFFNTPARRKFLKAEKTEFDHLQEVIRRLALARFDVAFHLRHNGKSILSLHEAHDETARARRVGAICGGGFMEQALPIDVERNGLRLWGWVGLPTFSRSQADLQYFFVNGRAVRDKLVAHAVRQAYRDVLFNGRHPTFVLFLELEPNGVDVNVHPTKHEVRFREGRSVHDFLYGTLHRALADVRPEDHLASAPAAAAEITRPTGQQAGEFGPQGEMRLASPVLEQPQVPQHSISNGGSGAGYQYQYTPRPSQPLPAAEAQAVYREFYKPLNDDAAGPATLPQSQGDIPPLGYALAQLKGIYILAENAAGLVLVDMHAAHERIMYERLKVAMASEGLSGQPLLVPESLALSQREADCAEEHAQWFQRLGFELQRLGPETLAIRQIPALLKQAEANRLVQDVLADLMEYGTSDRIQAHLNELLGTMACHGAVRANRRLAIPEMNALLRDMENTERSGQCNHGRPTWTQMGLDDLDKLFLRGR.

Belongs to the DNA mismatch repair MutL/HexB family.

This protein is involved in the repair of mismatches in DNA. It is required for dam-dependent methyl-directed DNA mismatch repair. May act as a 'molecular matchmaker', a protein that promotes the formation of a stable complex between two or more DNA-binding proteins in an ATP-dependent manner without itself being part of a final effector complex. The protein is DNA mismatch repair protein MutL of Pseudomonas putida (strain W619).